A 215-amino-acid chain; its full sequence is MIQPVSLEFVPGPSGLEVKYAAVMDYLSIWQAMKAFTASRTQNTPDEIWLLQHWPVYTQGVAGKPEHLLCNPGIPVVRTDRGGQITYHGPGQIIAYLLLDMRRLKLGVRDLVRKMEGAVVDLLDEYRVNACGDEDAPGVYVGGAKIAALGLKIKNGCCYHGLALNVSMDLAPFMAINPCGYTGLRVTQTSDLGITDELETLQGKLAEKLKARLKQ.

Residues 42-215 enclose the BPL/LPL catalytic domain; the sequence is QNTPDEIWLL…AEKLKARLKQ (174 aa). Substrate contacts are provided by residues 81–88, 148–150, and 161–163; these read RGGQITYH, ALG, and GLA. Cys179 acts as the Acyl-thioester intermediate in catalysis.

This sequence belongs to the LipB family.

The protein localises to the cytoplasm. It catalyses the reaction octanoyl-[ACP] + L-lysyl-[protein] = N(6)-octanoyl-L-lysyl-[protein] + holo-[ACP] + H(+). It functions in the pathway protein modification; protein lipoylation via endogenous pathway; protein N(6)-(lipoyl)lysine from octanoyl-[acyl-carrier-protein]: step 1/2. Its function is as follows. Catalyzes the transfer of endogenously produced octanoic acid from octanoyl-acyl-carrier-protein onto the lipoyl domains of lipoate-dependent enzymes. Lipoyl-ACP can also act as a substrate although octanoyl-ACP is likely to be the physiological substrate. This chain is Octanoyltransferase, found in Nitrosospira multiformis (strain ATCC 25196 / NCIMB 11849 / C 71).